Here is a 142-residue protein sequence, read N- to C-terminus: Large ribosomal subunit protein uL13 (142 aa).

It belongs to the universal ribosomal protein uL13 family. As to quaternary structure, part of the 50S ribosomal subunit.

In terms of biological role, this protein is one of the early assembly proteins of the 50S ribosomal subunit, although it is not seen to bind rRNA by itself. It is important during the early stages of 50S assembly. In Pseudomonas aeruginosa (strain LESB58), this protein is Large ribosomal subunit protein uL13.